The sequence spans 388 residues: Succinate--CoA ligase [ADP-forming] subunit beta (388 aa).

In terms of domain architecture, ATP-grasp spans 9–244 (KEILRKFGVA…LDEEDPAEIE (236 aa)). ATP contacts are provided by residues Lys46, 53 to 55 (GRG), Glu99, Ala102, and Glu107. Mg(2+) contacts are provided by Asn199 and Asp213. Residues Asn264 and 321-323 (GIM) each bind substrate.

The protein belongs to the succinate/malate CoA ligase beta subunit family. As to quaternary structure, heterotetramer of two alpha and two beta subunits. It depends on Mg(2+) as a cofactor.

It carries out the reaction succinate + ATP + CoA = succinyl-CoA + ADP + phosphate. The enzyme catalyses GTP + succinate + CoA = succinyl-CoA + GDP + phosphate. Its pathway is carbohydrate metabolism; tricarboxylic acid cycle; succinate from succinyl-CoA (ligase route): step 1/1. Functionally, succinyl-CoA synthetase functions in the citric acid cycle (TCA), coupling the hydrolysis of succinyl-CoA to the synthesis of either ATP or GTP and thus represents the only step of substrate-level phosphorylation in the TCA. The beta subunit provides nucleotide specificity of the enzyme and binds the substrate succinate, while the binding sites for coenzyme A and phosphate are found in the alpha subunit. The protein is Succinate--CoA ligase [ADP-forming] subunit beta of Burkholderia lata (strain ATCC 17760 / DSM 23089 / LMG 22485 / NCIMB 9086 / R18194 / 383).